A 420-amino-acid chain; its full sequence is Transcription activator GLK1 (420 aa).

The disordered stretch occupies residues 74–152 (GDFSNHMNAS…NRISNNEGKR (79 aa)). The span at 106–117 (KGEEVVSKRDDV) shows a compositional bias: basic and acidic residues. Residues 135-147 (SSSASSKNNRISN) are compositionally biased toward low complexity. The myb-like GARP DNA-binding region spans 150-209 (GKRKVKVDWTPELHRRFVEAVEQLGVDKAVPSRILELMGVHCLTRHNVASHLQKYRSHRK).

As to quaternary structure, interacts with NAC92. In terms of tissue distribution, expressed in rosette and cauline leaves. Expressed at low levels in cotyledons and shoots.

The protein resides in the nucleus. Its function is as follows. Transcriptional activator that functions with GLK2 to promote chloroplast development. Acts as an activator of nuclear photosynthetic genes involved in chlorophyll biosynthesis, light harvesting, and electron transport. Acts in a cell-autonomous manner to coordinate and maintain the photosynthetic apparatus within individual cells. May function in photosynthetic capacity optimization by integrating responses to variable environmental and endogenous cues. Prevents premature senescence. In Arabidopsis thaliana (Mouse-ear cress), this protein is Transcription activator GLK1 (GLK1).